The sequence spans 211 residues: Mediator-associated protein 2 (211 aa).

The interval Q128 to E211 is disordered. A compositionally biased stretch (low complexity) spans S134–S148. S173 carries the phosphoserine modification. Residues S189–E198 show a composition bias toward low complexity. The span at K202–E211 shows a compositional bias: basic residues.

In terms of assembly, associated with the Mediator complex.

The protein localises to the nucleus. In Arabidopsis thaliana (Mouse-ear cress), this protein is Mediator-associated protein 2.